Here is a 292-residue protein sequence, read N- to C-terminus: MNFQELILTLDNFWARQNCIIQQPYDVEKGAGTMNPATFLRALGPEPWRVAYVEPSRRPTDGRYGENPNRLQHYYQYQVILKPSPDDVLEVYLDSLKAIGIDPDEHDIRFVEDNWESPTLGAWGLGWEVWLDGMEVTQFTYFQQCGGIDCRPVSAEITYGLERLAMFIQGVDNVFDITWVDGITYGDVHHRGEVEHSHYNFELADTEMLFKLFDMYEREALRVVEKGFVLPAYDYVLKCSHTFNLLDARGAISVTERTGFIGRVRNLARTCAQAYIEQRQAMGYPLLKRKED.

Belongs to the class-II aminoacyl-tRNA synthetase family. As to quaternary structure, tetramer of two alpha and two beta subunits.

It is found in the cytoplasm. The catalysed reaction is tRNA(Gly) + glycine + ATP = glycyl-tRNA(Gly) + AMP + diphosphate. This chain is Glycine--tRNA ligase alpha subunit, found in Pelotomaculum thermopropionicum (strain DSM 13744 / JCM 10971 / SI).